The primary structure comprises 306 residues: Putative S-adenosyl-L-methionine-dependent methyltransferase MAP_4190c (306 aa).

Residues Asp129 and 158-159 each bind S-adenosyl-L-methionine; that span reads DL.

The protein belongs to the UPF0677 family.

Exhibits S-adenosyl-L-methionine-dependent methyltransferase activity. The sequence is that of Putative S-adenosyl-L-methionine-dependent methyltransferase MAP_4190c from Mycolicibacterium paratuberculosis (strain ATCC BAA-968 / K-10) (Mycobacterium paratuberculosis).